A 122-amino-acid chain; its full sequence is Small ribosomal subunit protein uS8c (122 aa).

Belongs to the universal ribosomal protein uS8 family. As to quaternary structure, part of the 30S ribosomal subunit.

The protein localises to the plastid. It is found in the chloroplast. One of the primary rRNA binding proteins, it binds directly to 16S rRNA central domain where it helps coordinate assembly of the platform of the 30S subunit. This chain is Small ribosomal subunit protein uS8c (rps8), found in Ostreococcus tauri.